Reading from the N-terminus, the 568-residue chain is Glycine--tRNA ligase (568 aa).

Substrate-binding residues include Arg97 and Glu163. Residues 195-197, 205-210, 322-323, and 441-444 contribute to the ATP site; these read RNE, IRLREF, EC, and GIDR. 210 to 214 is a substrate binding site; that stretch reads FTQAE. 437-441 contributes to the substrate binding site; that stretch reads EPSFG.

Belongs to the class-II aminoacyl-tRNA synthetase family.

It localises to the cytoplasm. The catalysed reaction is tRNA(Gly) + glycine + ATP = glycyl-tRNA(Gly) + AMP + diphosphate. Its function is as follows. Catalyzes the attachment of glycine to tRNA(Gly). The polypeptide is Glycine--tRNA ligase (Pyrococcus furiosus (strain ATCC 43587 / DSM 3638 / JCM 8422 / Vc1)).